The primary structure comprises 85 residues: Small proline-rich protein 2D (85 aa).

Residues 1–11 (MSYQQQQCKQP) show a composition bias toward low complexity. The segment at 1–20 (MSYQQQQCKQPCQPPPVCPP) is disordered. 4 repeat units span residues 21 to 29 (KKCPEPCPP), 30 to 38 (LKCPEPCPP), 39 to 47 (PKCPEPCPP), and 48 to 56 (PKCPEPCPE). The segment at 21–56 (KKCPEPCPPLKCPEPCPPPKCPEPCPPPKCPEPCPE) is 4 X 9 AA approximate tandem repeats. Residues 57–85 (PCPPPSCQQKCPPAQPPPPCQQKCPPKSK) form a disordered region.

This sequence belongs to the cornifin (SPRR) family. Expressed in uterus.

The protein resides in the cytoplasm. In terms of biological role, cross-linked envelope protein of keratinocytes. It is a keratinocyte protein that first appears in the cell cytosol, but ultimately becomes cross-linked to membrane proteins by transglutaminase. All that results in the formation of an insoluble envelope beneath the plasma membrane. The sequence is that of Small proline-rich protein 2D (Sprr2d) from Mus musculus (Mouse).